The primary structure comprises 193 residues: Potassium-transporting ATPase KdpC subunit (193 aa).

The helical transmembrane segment at 7–27 (PLIVVFVVLVAVTGLAYPAVM) threads the bilayer.

The protein belongs to the KdpC family. In terms of assembly, the system is composed of three essential subunits: KdpA, KdpB and KdpC.

The protein localises to the cell inner membrane. Part of the high-affinity ATP-driven potassium transport (or Kdp) system, which catalyzes the hydrolysis of ATP coupled with the electrogenic transport of potassium into the cytoplasm. This subunit acts as a catalytic chaperone that increases the ATP-binding affinity of the ATP-hydrolyzing subunit KdpB by the formation of a transient KdpB/KdpC/ATP ternary complex. The sequence is that of Potassium-transporting ATPase KdpC subunit from Burkholderia mallei (strain NCTC 10247).